A 54-amino-acid polypeptide reads, in one-letter code: UPF0391 membrane protein Pfl01_0044 (54 aa).

2 consecutive transmembrane segments (helical) span residues 4–24 and 29–49; these read WAITFLIIAIIAAVLGFGGIA and GIAKILFVVFLVMFIASFFFG.

This sequence belongs to the UPF0391 family.

The protein resides in the cell membrane. The chain is UPF0391 membrane protein Pfl01_0044 from Pseudomonas fluorescens (strain Pf0-1).